We begin with the raw amino-acid sequence, 508 residues long: 25-hydroxyvitamin D-1 alpha hydroxylase, mitochondrial (508 aa).

Cys-455 lines the heme pocket.

This sequence belongs to the cytochrome P450 family. The cofactor is heme. In terms of tissue distribution, kidney.

Its subcellular location is the mitochondrion membrane. It carries out the reaction calcidiol + 2 reduced [adrenodoxin] + O2 + 2 H(+) = calcitriol + 2 oxidized [adrenodoxin] + H2O. It catalyses the reaction secalciferol + 2 reduced [adrenodoxin] + O2 + 2 H(+) = calcitetrol + 2 oxidized [adrenodoxin] + H2O. The enzyme catalyses 25-hydroxy-24-oxocalciol + 2 reduced [adrenodoxin] + O2 + 2 H(+) = (1S)-1,25-dihydroxy-24-oxocalciol + 2 oxidized [adrenodoxin] + H2O. The catalysed reaction is 25-hydroxyvitamin D2 + 2 reduced [adrenodoxin] + O2 + 2 H(+) = 1alpha,25-dihydroxyvitamin D2 + 2 oxidized [adrenodoxin] + H2O. Its pathway is hormone biosynthesis; vitamin D biosynthesis. Its activity is regulated as follows. Activated by cardiolipin and dioleoyl phosphatidylethanolamine (DOPE), phospholipids found in the inner mitochondrial membrane. Inhibited by high substrate concentration. Functionally, a cytochrome P450 monooxygenase involved in vitamin D metabolism and in calcium and phosphorus homeostasis. Catalyzes the rate-limiting step in the activation of vitamin D in the kidney, namely the hydroxylation of 25-hydroxyvitamin D3/calcidiol at the C1alpha-position to form the hormonally active form of vitamin D3, 1alpha,25-dihydroxyvitamin D3/calcitriol that acts via the vitamin D receptor (VDR). Has 1alpha-hydroxylase activity on vitamin D intermediates of the CYP24A1-mediated inactivation pathway. Converts 24R,25-dihydroxyvitamin D3/secalciferol to 1-alpha,24,25-trihydroxyvitamin D3, an active ligand of VDR. Also active on 25-hydroxyvitamin D2. Mechanistically, uses molecular oxygen inserting one oxygen atom into a substrate, and reducing the second into a water molecule, with two electrons provided by NADPH via FDXR/adrenodoxin reductase and FDX1/adrenodoxin. This Homo sapiens (Human) protein is 25-hydroxyvitamin D-1 alpha hydroxylase, mitochondrial (CYP27B1).